The sequence spans 227 residues: uncharacterized protein (227 aa).

Positions 1–23 (MKKLTVTFLTFISIFFAATAAFA) are cleaved as a signal peptide.

This is an uncharacterized protein from Coxiella burnetii (strain RSA 493 / Nine Mile phase I).